Reading from the N-terminus, the 195-residue chain is Putative archaetidylserine decarboxylase proenzyme (195 aa).

Catalysis depends on serine 159, which acts as the Schiff-base intermediate with substrate; via pyruvic acid. At serine 159 the chain carries Pyruvic acid (Ser); by autocatalysis.

The protein belongs to the phosphatidylserine decarboxylase family. PSD-A subfamily. As to quaternary structure, heterodimer of a large membrane-associated beta subunit and a small pyruvoyl-containing alpha subunit. Pyruvate serves as cofactor. Is synthesized initially as an inactive proenzyme. Formation of the active enzyme involves a self-maturation process in which the active site pyruvoyl group is generated from an internal serine residue via an autocatalytic post-translational modification. Two non-identical subunits are generated from the proenzyme in this reaction, and the pyruvate is formed at the N-terminus of the alpha chain, which is derived from the carboxyl end of the proenzyme. The autoendoproteolytic cleavage occurs by a canonical serine protease mechanism, in which the side chain hydroxyl group of the serine supplies its oxygen atom to form the C-terminus of the beta chain, while the remainder of the serine residue undergoes an oxidative deamination to produce ammonia and the pyruvoyl prosthetic group on the alpha chain. During this reaction, the Ser that is part of the protease active site of the proenzyme becomes the pyruvoyl prosthetic group, which constitutes an essential element of the active site of the mature decarboxylase. Post-translationally, is synthesized initially as an inactive proenzyme. Formation of the active enzyme involves a self-maturation process in which the active site pyruvoyl group is generated from an internal serine residue via an autocatalytic post-translational modification. Two non-identical subunits are generated from the proenzyme in this reaction, and the pyruvate is formed at the N-terminus of the alpha chain, which is derived from the carboxyl end of the proenzyme. The post-translation cleavage follows an unusual pathway, termed non-hydrolytic serinolysis, in which the side chain hydroxyl group of the serine supplies its oxygen atom to form the C-terminus of the beta chain, while the remainder of the serine residue undergoes an oxidative deamination to produce ammonia and the pyruvoyl prosthetic group on the alpha chain.

It localises to the cell membrane. The enzyme catalyses archaetidylserine + H(+) = archaetidylethanolamine + CO2. Its function is as follows. Catalyzes the formation of archaetidylethanolamine (PtdEtn) from archaetidylserine (PtdSer). The polypeptide is Putative archaetidylserine decarboxylase proenzyme (Archaeoglobus fulgidus (strain ATCC 49558 / DSM 4304 / JCM 9628 / NBRC 100126 / VC-16)).